A 289-amino-acid polypeptide reads, in one-letter code: Glycine-rich RNA-binding protein 5, mitochondrial (289 aa).

Residues 1 to 31 (MAFLSKVGRLFSQTSSHVTASSSMLQSIRCM) constitute a mitochondrion transit peptide. The RRM domain occupies 34–111 (SKIFVGGISY…RRIRVNYATE (78 aa)). The segment at 219–289 (QGSSTNAGFD…TDDGDVAKRA (71 aa)) is disordered. The span at 257–272 (GSDNQFGDAENGNTEN) shows a compositional bias: polar residues.

This sequence belongs to the GR-RBP family. Homodimer. Interacts with MORF8/RIP1 AND RBG3/ORRM3. Binds to RBG2/ORRM5.

It is found in the mitochondrion. Its function is as follows. Possibly has a role in RNA transcription or processing during stress. Binds RNAs and DNAs sequence with a preference to single-stranded nucleic acids. Displays strong affinity to poly(U) sequence. Involved in C-to-U editing of mitochondrial RNA. Functions as a major mitochondrial editing factor. Controls 44 percent of the mitochondrial editing sites. This chain is Glycine-rich RNA-binding protein 5, mitochondrial, found in Arabidopsis thaliana (Mouse-ear cress).